The sequence spans 103 residues: Large ribosomal subunit protein uL24 (103 aa).

It belongs to the universal ribosomal protein uL24 family. As to quaternary structure, part of the 50S ribosomal subunit.

In terms of biological role, one of two assembly initiator proteins, it binds directly to the 5'-end of the 23S rRNA, where it nucleates assembly of the 50S subunit. One of the proteins that surrounds the polypeptide exit tunnel on the outside of the subunit. The protein is Large ribosomal subunit protein uL24 of Anoxybacillus flavithermus (strain DSM 21510 / WK1).